The primary structure comprises 293 residues: MFKGSIVALITPFKDGAIDRKSLKRLIDFHVEKGTDGIVIAGTTGESATLTFSEHEDLIKMAVEFADKRIPIIAGTGANATHEAIALTKSAEKAGADGSLQIVPYYNKPTQEGIYQHFKAIAEETSIPLILYNIPSRTGVDMLPETFARLYSDFPNVIGIKEATGNVARVSEMISLTNPDVVILSGDDALTLPMMAVGAKGVISVANNLVPEDIATMCRLALEGRFEEARQIHDRYWKLFKTLFIETNPIPVKTAAYLMGLIDDIEMRLPLYYMKPENEEKLKSVLKDYGLIR.

T44 is a pyruvate binding site. The Proton donor/acceptor role is filled by Y132. The active-site Schiff-base intermediate with substrate is K161. I203 contributes to the pyruvate binding site.

It belongs to the DapA family. As to quaternary structure, homotetramer; dimer of dimers.

The protein resides in the cytoplasm. The enzyme catalyses L-aspartate 4-semialdehyde + pyruvate = (2S,4S)-4-hydroxy-2,3,4,5-tetrahydrodipicolinate + H2O + H(+). It functions in the pathway amino-acid biosynthesis; L-lysine biosynthesis via DAP pathway; (S)-tetrahydrodipicolinate from L-aspartate: step 3/4. In terms of biological role, catalyzes the condensation of (S)-aspartate-beta-semialdehyde [(S)-ASA] and pyruvate to 4-hydroxy-tetrahydrodipicolinate (HTPA). The chain is 4-hydroxy-tetrahydrodipicolinate synthase from Persephonella marina (strain DSM 14350 / EX-H1).